The sequence spans 479 residues: F-box protein SKIP17 (479 aa).

The F-box domain maps to 92 to 138; sequence NSNSWSLPPELTIKVFSMLDTKSMMQAAVCCTMFNKCAMDRLCYSHI. Positions 435 to 479 are disordered; that stretch reads EMMEAEDDEVDEEDDSDDDTDDVSDEDESENDDDMGMGFDVDYLL. A compositionally biased stretch (acidic residues) spans 437–469; the sequence is MEAEDDEVDEEDDSDDDTDDVSDEDESENDDDM.

In terms of assembly, part of a SCF (ASK-cullin-F-box) protein ligase complex. Interacts with SPK1B/ASK2.

It localises to the nucleus. The protein operates within protein modification; protein ubiquitination. In terms of biological role, component of SCF(ASK-cullin-F-box) E3 ubiquitin ligase complexes, which may mediate the ubiquitination and subsequent proteasomal degradation of target proteins. The sequence is that of F-box protein SKIP17 (SKIP17) from Arabidopsis thaliana (Mouse-ear cress).